Here is a 145-residue protein sequence, read N- to C-terminus: Large ribosomal subunit protein uL11 (145 aa).

It belongs to the universal ribosomal protein uL11 family. As to quaternary structure, part of the ribosomal stalk of the 50S ribosomal subunit. Interacts with L10 and the large rRNA to form the base of the stalk. L10 forms an elongated spine to which L12 dimers bind in a sequential fashion forming a multimeric L10(L12)X complex. One or more lysine residues are methylated.

In terms of biological role, forms part of the ribosomal stalk which helps the ribosome interact with GTP-bound translation factors. The sequence is that of Large ribosomal subunit protein uL11 from Rickettsia prowazekii (strain Madrid E).